The following is an 808-amino-acid chain: Na(+)/H(+) antiporter 2 (808 aa).

Transmembrane regions (helical) follow at residues 12 to 32 (HVAY…SLFV), 36 to 56 (LYIG…PHCL), 70 to 90 (ITLE…SVEL), 105 to 125 (LLVP…WILV), 128 to 148 (LNFP…PVLA), 174 to 194 (CNDG…LYPG), 203 to 223 (WICV…CIIG), 244 to 264 (FLAF…MLGV), and 267 to 287 (LLVS…AAKT). The N-linked (GlcNAc...) asparagine glycan is linked to N291. 5 helical membrane passes run 294–314 (NVID…ILPW), 319–339 (NPDI…VIFL), 361–381 (AMFI…AITS), 409–429 (VMAC…IVHG), and 432–452 (VAVI…LPTG). 2 disordered regions span residues 478–499 (QRLD…SGMV) and 541–562 (HAST…NGRA). A compositionally biased stretch (polar residues) spans 542 to 561 (ASTNDSHGTTTANLGTSNGR). N545 and N602 each carry an N-linked (GlcNAc...) asparagine glycan. Positions 774-808 (LHSEDEMADDEAESENDMDYEDSDGPASRFKDHAD) are disordered. Residues 779 to 797 (EMADDEAESENDMDYEDSD) are compositionally biased toward acidic residues.

It belongs to the fungal Na(+)/H(+) exchanger family.

The protein resides in the membrane. Sodium export from cell, takes up external protons in exchange for internal sodium ions. Seems to be poorly expressed. In Zygosaccharomyces rouxii, this protein is Na(+)/H(+) antiporter 2 (SOD22).